A 399-amino-acid polypeptide reads, in one-letter code: A-type ATP synthase subunit C (399 aa).

This sequence belongs to the V-ATPase V0D/AC39 subunit family. The A-type ATPase is composed of subunits A(3), B(3), C, D, E(1 or 2), F, H(2), I and K(x).

The protein resides in the cell membrane. In terms of biological role, component of the A-type ATP synthase that produces ATP from ADP in the presence of a proton gradient across the membrane. The protein is A-type ATP synthase subunit C of Methanocaldococcus jannaschii (strain ATCC 43067 / DSM 2661 / JAL-1 / JCM 10045 / NBRC 100440) (Methanococcus jannaschii).